The primary structure comprises 334 residues: Cyclin N-terminal domain-containing protein 1 (334 aa).

The 152-residue stretch at 29 to 180 (NALLHLAQQN…ILKSLNFQIN (152 aa)) folds into the Cyclin N-terminal domain.

As to quaternary structure, interacts with PRR19; this interaction promotes crossover formation. Interacts with RFC3 and RFC4; these interactions facilitate crossover formation. Interacts with CDC34; this interaction regulates the cell-cycle progression. Isoform 2 is expressed in spermatocyte.

The protein resides in the nucleus. It is found in the cytoplasm. It localises to the chromosome. Its function is as follows. Plays a role in the different steps of crossover formation during meiotic recombination. Participates in the crossover differentiation step of crossover-specific recombination intermediates through its interaction with PRR19. In addition, stimulates crossover formation through the interactions with RFC3 and RFC4 and simultaneously regulates cell-cycle progression through interactions with CDC34 and subsequent ubiquitination of WEE1. May also participates in an active deselection process that destabilizes or removes excess pre-CO intermediates. This chain is Cyclin N-terminal domain-containing protein 1, found in Mus musculus (Mouse).